We begin with the raw amino-acid sequence, 391 residues long: NADH-quinone oxidoreductase subunit D (391 aa).

The protein belongs to the complex I 49 kDa subunit family. In terms of assembly, NDH-1 is composed of 14 different subunits. Subunits NuoB, C, D, E, F, and G constitute the peripheral sector of the complex.

The protein resides in the cell inner membrane. It catalyses the reaction a quinone + NADH + 5 H(+)(in) = a quinol + NAD(+) + 4 H(+)(out). Functionally, NDH-1 shuttles electrons from NADH, via FMN and iron-sulfur (Fe-S) centers, to quinones in the respiratory chain. The immediate electron acceptor for the enzyme in this species is believed to be ubiquinone. Couples the redox reaction to proton translocation (for every two electrons transferred, four hydrogen ions are translocated across the cytoplasmic membrane), and thus conserves the redox energy in a proton gradient. The chain is NADH-quinone oxidoreductase subunit D from Rickettsia rickettsii (strain Iowa).